A 472-amino-acid polypeptide reads, in one-letter code: ESX-3 secretion system protein EccD3 (472 aa).

Transmembrane regions (helical) follow at residues 121–141, 155–175, 183–203, 211–231, 236–256, 258–278, 327–347, 349–369, 381–401, 405–425, and 450–470; these read WGIAHIQRGALAAVIAVALLA, LAGLLAVAGIAVASALAGLLI, GIALSIAALVPIGAALALAVP, VLLGAAGVAAWSLIALMIPSA, VVAFFTAAAVVGASVALAAGA, LLWQLPLLSIGCGLIVAALLV, QSGFIAAAVLLSVLGSVAIAV, PEALSVVGWYLVAATAAAATL, AWLLAQPYLVAGVLLVFYTAT, VAAFGAVLVLAVLMLAWVVVA, and GLDVSLIPVMAYLVGLFAWVL.

Belongs to the EccD/Snm4 family. As to quaternary structure, part of the ESX-3 / type VII secretion system (T7SS), which is composed of cytosolic and membrane components. The ESX-3 membrane complex is composed of EccB3, EccC3, EccD3 and EccE3.

The protein resides in the cell inner membrane. Functionally, part of the ESX-3 specialized secretion system, which is important for iron and zinc uptake or homeostasis. The chain is ESX-3 secretion system protein EccD3 from Mycobacterium tuberculosis (strain CDC 1551 / Oshkosh).